Consider the following 344-residue polypeptide: C5a anaphylatoxin chemotactic receptor 2 (344 aa).

The Extracellular segment spans residues Met1–Leu44. Asn3 is a glycosylation site (N-linked (GlcNAc...) asparagine). The chain crosses the membrane as a helical span at residues Leu45–Trp67. Topologically, residues Lys68–Trp78 are cytoplasmic. Residues Phe79 to Ala101 traverse the membrane as a helical segment. The Extracellular segment spans residues Gln102 to Thr120. A disulfide bridge links Cys113 with Cys192. Residues Ile121–Phe143 traverse the membrane as a helical segment. Topologically, residues Arg144–Phe155 are cytoplasmic. Residues Gly156–Tyr178 form a helical membrane-spanning segment. Residues Arg179 to Thr208 lie on the Extracellular side of the membrane. The helical transmembrane segment at Val209–Arg231 threads the bilayer. Residues Gln232 to Ala243 lie on the Cytoplasmic side of the membrane. A helical transmembrane segment spans residues Val244–Pro266. Topologically, residues Pro267–Pro280 are extracellular. A helical transmembrane segment spans residues Leu281–Phe300. At Gly301 to Val344 the chain is on the cytoplasmic side. Ser325 carries the post-translational modification Phosphoserine.

This sequence belongs to the G-protein coupled receptor 1 family. As to quaternary structure, interacts with C3 (the anaphylatoxin peptide C3a and the adipogenic hormone ASP); the interaction occurs with higher affinity for ASP, enhancing the phosphorylation and activation of GPR77, recruitment of ARRB2 to the cell surface and endocytosis of GRP77. Highly expressed in liver and spleen. Lower levels in intestine, brain and kidney. Also expressed in adipose tissues with highest levels in gonadal and ingual fat depots. Lower levels in brown tissue.

The protein resides in the cell membrane. Its function is as follows. Receptor for the chemotactic and inflammatory C3a, C4a and C5a anaphylatoxin peptides and also for their dearginated forms ASP/C3adesArg, C4adesArg and C5adesArg respectively. Couples weakly to G(i)-mediated signaling pathways. This Mus musculus (Mouse) protein is C5a anaphylatoxin chemotactic receptor 2 (C5ar2).